A 185-amino-acid chain; its full sequence is Ribosome-recycling factor (185 aa).

The interval 132–152 is disordered; it reads RRDANEQLKKMEKDSELTEDD.

This sequence belongs to the RRF family.

The protein resides in the cytoplasm. Responsible for the release of ribosomes from messenger RNA at the termination of protein biosynthesis. May increase the efficiency of translation by recycling ribosomes from one round of translation to another. This Alkaliphilus metalliredigens (strain QYMF) protein is Ribosome-recycling factor.